The primary structure comprises 628 residues: ATP-binding cassette sub-family F member 2 (628 aa).

The segment at 1–57 (MPSDLAKKKAAKKKEAAKARQRPRKGHEENGDAVTEPQVAEEKIEEANGRETTGDGE) is disordered. Positions 40 to 53 (AEEKIEEANGRETT) are enriched in basic and acidic residues. ABC transporter domains follow at residues 91 to 330 (VHII…ENQM) and 401 to 618 (IMVQ…VDEE). ATP is bound at residue 123–130 (GLNGIGKS). Thr223 bears the Phosphothreonine mark. Lys309 carries the post-translational modification N6-acetyllysine. 435 to 442 (GPNGAGKS) provides a ligand contact to ATP. Ser517 bears the Phosphoserine mark.

This sequence belongs to the ABC transporter superfamily. ABCF family. EF3 subfamily.

The chain is ATP-binding cassette sub-family F member 2 from Mus musculus (Mouse).